Reading from the N-terminus, the 497-residue chain is Cobyrinate a,c-diamide synthase (497 aa).

Residues 273–478 (RIGIALDEAF…AHLHGVAYRE (206 aa)) form the GATase cobBQ-type domain. The active-site Nucleophile is the Cys-355.

The protein belongs to the CobB/CbiA family. Mg(2+) serves as cofactor.

The enzyme catalyses cob(II)yrinate + 2 L-glutamine + 2 ATP + 2 H2O = cob(II)yrinate a,c diamide + 2 L-glutamate + 2 ADP + 2 phosphate + 2 H(+). It catalyses the reaction Ni-sirohydrochlorin + 2 L-glutamine + 2 ATP + 2 H2O = Ni-sirohydrochlorin a,c-diamide + 2 L-glutamate + 2 ADP + 2 phosphate + 2 H(+). It participates in cofactor biosynthesis; adenosylcobalamin biosynthesis; cob(II)yrinate a,c-diamide from sirohydrochlorin (anaerobic route): step 10/10. Catalyzes the ATP-dependent amidation of the two carboxylate groups at positions a and c of cobyrinate, using either L-glutamine or ammonia as the nitrogen source (Potential). Involved in the biosynthesis of the unique nickel-containing tetrapyrrole coenzyme F430, the prosthetic group of methyl-coenzyme M reductase (MCR), which plays a key role in methanogenesis and anaerobic methane oxidation. Catalyzes the ATP-dependent amidation of the two carboxylate groups at positions a and c of Ni-sirohydrochlorin, using L-glutamine or ammonia as the nitrogen source. In Methanosarcina acetivorans (strain ATCC 35395 / DSM 2834 / JCM 12185 / C2A), this protein is Cobyrinate a,c-diamide synthase.